Reading from the N-terminus, the 202-residue chain is Coiled-coil domain-containing protein mdt-28 (202 aa).

Acidic residues-rich tracts occupy residues 1–15 (MFEELDAEDGGEEQE) and 28–45 (EDIDDILGDAPDLPDDEY). The segment at 1-83 (MFEELDAEDG…NEDDEEPIEP (83 aa)) is disordered. Positions 159–184 (IEEENLDEAIERQETIIAAAREMLNS) form a coiled coil.

In terms of assembly, interacts with mdt-6 and mdt-30. As to expression, ubiquitously expressed in tissues including epidermal, intestinal, pharyngeal and uterine, and is also expressed in vulval muscle cells and gut granules.

It is found in the nucleus. The protein localises to the cytoplasm. Functionally, plays a role in normal growth and development. This chain is Coiled-coil domain-containing protein mdt-28, found in Caenorhabditis elegans.